Reading from the N-terminus, the 489-residue chain is MASAPSVTSLADEVNCPICQGTLREPVTIDCGHNFCRGCLTRYCEIPGPESEESLSCPLCKEPFRPGSFRPNWQLANVVENIERLQLASTRGLEVEDACPEHGEKIYFFCEEDEAQLCVVCRETGQHGAHTVRFLEDAAGPYREQIQKCLVCLRKEREEIQETQSRENKRIQVLLTQVATKRQQVISQFAHLSQFLQQQQTALLAQLEGLDGDILKQQEEFDSLATGEICRFSTLIEELEEKNKRTARGLLTDIRSTLIRCETRKCRKPEAISPELGQRIRDFPQQAIPLRQEMKTFLEKLCFELDYEPAHISLDPQTSHPKLLLSEDHRRARFSYKWQNSPDTPQRFDRVTCVLAQCGFTGGRHTWMVNVDLAHGGSCTVGVVREDVRRKGELRLRPEEGIWAVRLAWGFVSALGSFPTRLALEEQPRKVQVSLDYEVGWITFVNAVTQEHIYTFTASFTQKIFPLFGLWGRGSSFSLSCQEGAVSLL.

An RING-type zinc finger spans residues 16–61 (CPICQGTLREPVTIDCGHNFCRGCLTRYCEIPGPESEESLSCPLCK). The B box-type zinc finger occupies 94-135 (EVEDACPEHGEKIYFFCEEDEAQLCVVCRETGQHGAHTVRFL). Positions 99, 102, 121, and 127 each coordinate Zn(2+). Residues 144–180 (EQIQKCLVCLRKEREEIQETQSRENKRIQVLLTQVAT) adopt a coiled-coil conformation. A B30.2/SPRY domain is found at 292–486 (QEMKTFLEKL…FSLSCQEGAV (195 aa)).

It belongs to the TRIM/RBCC family. As to quaternary structure, interacts with IFNAR1; this interaction prevents association of IFNAR1 with TYK2. In terms of tissue distribution, expressed in embryonic liver.

The protein localises to the cytoplasm. E3 ligase that plays an essential role in the differentiation and survival of terminal erythroid cells. May directly bind to PTEN and promote its ubiquitination, resulting in its proteasomal degradation and activation of hypertrophic signaling. In addition, plays a role in immune response regulation by repressing the phosphorylation of STAT1 and STAT2 in the interferon/JAK/STAT signaling pathway independent of its E3 ligase activity. Mechanistically, interacts with the intracellular domain of IFNAR1 and thereby inhibits the association between TYK2 and IFNAR1. This Mus musculus (Mouse) protein is Tripartite motif-containing protein 10 (Trim10).